The chain runs to 342 residues: S-adenosylmethionine:tRNA ribosyltransferase-isomerase (342 aa).

It belongs to the QueA family. In terms of assembly, monomer.

The protein resides in the cytoplasm. It catalyses the reaction 7-aminomethyl-7-carbaguanosine(34) in tRNA + S-adenosyl-L-methionine = epoxyqueuosine(34) in tRNA + adenine + L-methionine + 2 H(+). It participates in tRNA modification; tRNA-queuosine biosynthesis. Transfers and isomerizes the ribose moiety from AdoMet to the 7-aminomethyl group of 7-deazaguanine (preQ1-tRNA) to give epoxyqueuosine (oQ-tRNA). The protein is S-adenosylmethionine:tRNA ribosyltransferase-isomerase of Listeria welshimeri serovar 6b (strain ATCC 35897 / DSM 20650 / CCUG 15529 / CIP 8149 / NCTC 11857 / SLCC 5334 / V8).